The chain runs to 344 residues: NDP-polyphosphate phosphotransferase 2 (344 aa).

Positions methionine 1–proline 60 are disordered.

It belongs to the polyphosphate kinase 2 (PPK2) family. Class I subfamily. It depends on Mg(2+) as a cofactor.

The enzyme catalyses [phosphate](n) + ATP = [phosphate](n+1) + ADP. It carries out the reaction [phosphate](n) + CTP = [phosphate](n+1) + CDP. The catalysed reaction is [phosphate](n) + GTP = [phosphate](n+1) + GDP. It catalyses the reaction [phosphate](n) + UTP = [phosphate](n+1) + UDP. Its function is as follows. Uses inorganic polyphosphate (polyP) as a donor to convert NDP to NTP. PolyP hydrolysis is slightly faster with ADP, but it can also use GDP, CDP and UDP. This is NDP-polyphosphate phosphotransferase 2 from Ruegeria pomeroyi (strain ATCC 700808 / DSM 15171 / DSS-3) (Silicibacter pomeroyi).